Reading from the N-terminus, the 663-residue chain is UvrABC system protein B (663 aa).

Residues 1-10 show a composition bias toward basic and acidic residues; the sequence is MIDKRDDKPF. The segment at 1 to 23 is disordered; that stretch reads MIDKRDDKPFKLKSKYKPSGDQP. The 388-residue stretch at 31–418 folds into the Helicase ATP-binding domain; it reads DNIEGGEKAQ…TNTIIEQIIR (388 aa). 44 to 51 is an ATP binding site; that stretch reads GATGTGKT. A Beta-hairpin motif is present at residues 97-120; it reads YYDYYQPEAYVPSSDTYIEKDSSV. Residues 435 to 601 enclose the Helicase C-terminal domain; sequence QMDDLLGEIN…TIKKDIRGLI (167 aa). Positions 627–662 constitute a UVR domain; sequence KEAINALQKQMQEAAELLDFELAAQMRDLILELKLM.

The protein belongs to the UvrB family. Forms a heterotetramer with UvrA during the search for lesions. Interacts with UvrC in an incision complex.

It localises to the cytoplasm. The UvrABC repair system catalyzes the recognition and processing of DNA lesions. A damage recognition complex composed of 2 UvrA and 2 UvrB subunits scans DNA for abnormalities. Upon binding of the UvrA(2)B(2) complex to a putative damaged site, the DNA wraps around one UvrB monomer. DNA wrap is dependent on ATP binding by UvrB and probably causes local melting of the DNA helix, facilitating insertion of UvrB beta-hairpin between the DNA strands. Then UvrB probes one DNA strand for the presence of a lesion. If a lesion is found the UvrA subunits dissociate and the UvrB-DNA preincision complex is formed. This complex is subsequently bound by UvrC and the second UvrB is released. If no lesion is found, the DNA wraps around the other UvrB subunit that will check the other stand for damage. In Streptococcus pyogenes serotype M1, this protein is UvrABC system protein B.